We begin with the raw amino-acid sequence, 158 residues long: ATP synthase subunit delta, mitochondrial (158 aa).

The N-terminal 22 residues, 1-22, are a transit peptide targeting the mitochondrion; sequence MFRLTSARALFRVANVAARRTY.

This sequence belongs to the ATPase epsilon chain family. F-type ATPases have 2 components, CF(1) - the catalytic core - and CF(0) - the membrane proton channel. CF(1) has five subunits: alpha(3), beta(3), gamma(1), delta(1), epsilon(1). CF(0) has three main subunits: a, b and c.

The protein resides in the mitochondrion. Its subcellular location is the mitochondrion inner membrane. Functionally, mitochondrial membrane ATP synthase (F(1)F(0) ATP synthase or Complex V) produces ATP from ADP in the presence of a proton gradient across the membrane which is generated by electron transport complexes of the respiratory chain. F-type ATPases consist of two structural domains, F(1) - containing the extramembraneous catalytic core, and F(0) - containing the membrane proton channel, linked together by a central stalk and a peripheral stalk. During catalysis, ATP turnover in the catalytic domain of F(1) is coupled via a rotary mechanism of the central stalk subunits to proton translocation. Part of the complex F(1) domain and of the central stalk which is part of the complex rotary element. Rotation of the central stalk against the surrounding alpha(3)beta(3) subunits leads to hydrolysis of ATP in three separate catalytic sites on the beta subunits. This is ATP synthase subunit delta, mitochondrial (ATP16) from Eremothecium gossypii (strain ATCC 10895 / CBS 109.51 / FGSC 9923 / NRRL Y-1056) (Yeast).